The chain runs to 157 residues: Ribosomal RNA large subunit methyltransferase H (157 aa).

S-adenosyl-L-methionine-binding positions include Gly-106 and 125-130 (LSEMTF).

It belongs to the RNA methyltransferase RlmH family. As to quaternary structure, homodimer.

Its subcellular location is the cytoplasm. It catalyses the reaction pseudouridine(1915) in 23S rRNA + S-adenosyl-L-methionine = N(3)-methylpseudouridine(1915) in 23S rRNA + S-adenosyl-L-homocysteine + H(+). In terms of biological role, specifically methylates the pseudouridine at position 1915 (m3Psi1915) in 23S rRNA. The polypeptide is Ribosomal RNA large subunit methyltransferase H (Syntrophobacter fumaroxidans (strain DSM 10017 / MPOB)).